Here is a 424-residue protein sequence, read N- to C-terminus: Inhibin beta A chain (424 aa).

An N-terminal signal peptide occupies residues 1–20 (MPLLWLRGFLLASCWIIVRS). The propeptide occupies 21–308 (SPTPGSGGHS…EEHPHRRRRR (288 aa)). N-linked (GlcNAc...) asparagine glycosylation is present at Asn-165. Disordered regions lie at residues 178–197 (QQRRPQGSADAGEEAEDVGF) and 259–306 (KKKK…HRRR). The segment covering 188–197 (AGEEAEDVGF) has biased composition (acidic residues). Residues 263-275 (KEEEAEGRKRDGE) are compositionally biased toward basic and acidic residues. 4 cysteine pairs are disulfide-bonded: Cys-312–Cys-320, Cys-319–Cys-389, Cys-348–Cys-421, and Cys-352–Cys-423.

This sequence belongs to the TGF-beta family. As to quaternary structure, dimeric, linked by one or more disulfide bonds. Inhibin A is a dimer of alpha/INHA and beta-A/INHBA. Activin A is a homodimer of beta-A/INHBA. Activin AB is a dimer of beta-A/INHBA and beta-B/INHBB. Interacts with FST and FSTL3; these interactions prevent activin A interaction to its type II receptor. Activin A interacts with ACVR2A. Activin A interacts with BMPR2. Inhibin A interacts with ACVR1; this interaction creates a non-signaling complex (NSC) that inhibits ACVR1-mediated BMP signaling. Inhibin A interacts with ACVR2A.

The protein localises to the secreted. Inhibins/activins are involved in regulating a number of diverse functions such as hypothalamic and pituitary hormone secretion, gonadal hormone secretion, germ cell development and maturation, erythroid differentiation, insulin secretion, nerve cell survival, embryonic axial development or bone growth, depending on their subunit composition. Functionally, activin A is a homodimer of INHBA that plays a role in several essential biological processes including embryonic development, stem cell maintenance and differentiation, haematopoiesis, cell proliferation and tissue fibrosis. Signals through type I (such as ACVR1B or ACVR1C) and type II receptors (such as ACVR2A, ACVR2B or BMPR2) which, upon ligand binding, phosphorylate SMAD2 and SMAD3 intracellular signaling mediators that form a complex with SMAD4, translocate to the nucleus and modulate gene expression. Can also activate alternative non-canonical intracellular signaling pathways including the p38 MAPK, extracellular signal-regulated kinases 1/2 (ERK1/2) and c-Jun N-terminal kinases (JNKs) to modulate cell migration and differentiation. Alternatively, promotes osteoblastic differentiation via ACVRL1-SMAD1/5/9 pathway. In addition, can engage the type I receptor ACVR1 to form an ACVR1-activin A-type II receptor non-signaling complex (NSC) that renders receptors unavailable for engagement with BMPs, hence resulting in an apparent inhibition of ACVR1-mediated BMP signaling. In terms of biological role, inhibin A is a dimer of alpha/INHA and beta-A/INHBA that functions as a feedback regulator in the hypothalamic-pituitary-gonadal (HPG) axis. Inhibits the secretion of FSH from the anterior pituitary gland by acting on pituitary gonadotrope cells. Antagonizes activin A by binding to the proteoglycan, betaglycan, and forming a stable complex with and, thereby, sequestering type II activin receptors while excluding type I receptor. This is Inhibin beta A chain (INHBA) from Sus scrofa (Pig).